The following is a 331-amino-acid chain: DNA-directed RNA polymerase subunit alpha (331 aa).

The alpha N-terminal domain (alpha-NTD) stretch occupies residues 1-226; that stretch reads MLIAQRPTLT…ELFGLCRELN (226 aa). Residues 243-331 form an alpha C-terminal domain (alpha-CTD) region; it reads TNPEMAVPIE…GGTFFSPEDE (89 aa).

This sequence belongs to the RNA polymerase alpha chain family. Homodimer. The RNAP catalytic core consists of 2 alpha, 1 beta, 1 beta' and 1 omega subunit. When a sigma factor is associated with the core the holoenzyme is formed, which can initiate transcription.

The enzyme catalyses RNA(n) + a ribonucleoside 5'-triphosphate = RNA(n+1) + diphosphate. Its function is as follows. DNA-dependent RNA polymerase catalyzes the transcription of DNA into RNA using the four ribonucleoside triphosphates as substrates. The chain is DNA-directed RNA polymerase subunit alpha from Bifidobacterium longum (strain NCC 2705).